The sequence spans 68 residues: Large ribosomal subunit protein uL29c (68 aa).

Belongs to the universal ribosomal protein uL29 family.

It localises to the plastid. It is found in the chloroplast. In Pyropia yezoensis (Susabi-nori), this protein is Large ribosomal subunit protein uL29c.